A 428-amino-acid polypeptide reads, in one-letter code: Histidine--tRNA ligase (428 aa).

This sequence belongs to the class-II aminoacyl-tRNA synthetase family.

The protein resides in the cytoplasm. The enzyme catalyses tRNA(His) + L-histidine + ATP = L-histidyl-tRNA(His) + AMP + diphosphate + H(+). The sequence is that of Histidine--tRNA ligase from Korarchaeum cryptofilum (strain OPF8).